The following is a 93-amino-acid chain: Cobalt transport protein CbiN (93 aa).

2 helical membrane passes run 5 to 25 (LMLL…NHGG) and 63 to 83 (LLFT…LGYC).

Belongs to the CbiN family. Forms an energy-coupling factor (ECF) transporter complex composed of an ATP-binding protein (A component, CbiO), a transmembrane protein (T component, CbiQ) and 2 possible substrate-capture proteins (S components, CbiM and CbiN) of unknown stoichimetry.

The protein localises to the cell inner membrane. Its pathway is cofactor biosynthesis; adenosylcobalamin biosynthesis. Functionally, part of the energy-coupling factor (ECF) transporter complex CbiMNOQ involved in cobalt import. In Salmonella agona (strain SL483), this protein is Cobalt transport protein CbiN.